Consider the following 171-residue polypeptide: ATP synthase subunit b (171 aa).

Residues 26–46 (INLVLVIALLVYFLKGFLGGI) traverse the membrane as a helical segment.

The protein belongs to the ATPase B chain family. In terms of assembly, F-type ATPases have 2 components, F(1) - the catalytic core - and F(0) - the membrane proton channel. F(1) has five subunits: alpha(3), beta(3), gamma(1), delta(1), epsilon(1). F(0) has four main subunits: a(1), b(1), b'(1) and c(10-14). The alpha and beta chains form an alternating ring which encloses part of the gamma chain. F(1) is attached to F(0) by a central stalk formed by the gamma and epsilon chains, while a peripheral stalk is formed by the delta, b and b' chains.

Its subcellular location is the cellular thylakoid membrane. F(1)F(0) ATP synthase produces ATP from ADP in the presence of a proton or sodium gradient. F-type ATPases consist of two structural domains, F(1) containing the extramembraneous catalytic core and F(0) containing the membrane proton channel, linked together by a central stalk and a peripheral stalk. During catalysis, ATP synthesis in the catalytic domain of F(1) is coupled via a rotary mechanism of the central stalk subunits to proton translocation. Its function is as follows. Component of the F(0) channel, it forms part of the peripheral stalk, linking F(1) to F(0). The sequence is that of ATP synthase subunit b from Synechococcus sp. (strain RCC307).